The sequence spans 862 residues: DNA mismatch repair protein MutS (862 aa).

608-615 (GPNMAGKS) provides a ligand contact to ATP.

This sequence belongs to the DNA mismatch repair MutS family.

Functionally, this protein is involved in the repair of mismatches in DNA. It is possible that it carries out the mismatch recognition step. This protein has a weak ATPase activity. This is DNA mismatch repair protein MutS from Borreliella afzelii (strain PKo) (Borrelia afzelii).